An 84-amino-acid polypeptide reads, in one-letter code: Small ribosomal subunit protein bS20 (84 aa).

The segment at 1–28 (MPNIKSAIKRVKTADTRNSRNASQRSAM) is disordered.

This sequence belongs to the bacterial ribosomal protein bS20 family.

Its function is as follows. Binds directly to 16S ribosomal RNA. The sequence is that of Small ribosomal subunit protein bS20 from Listeria welshimeri serovar 6b (strain ATCC 35897 / DSM 20650 / CCUG 15529 / CIP 8149 / NCTC 11857 / SLCC 5334 / V8).